The sequence spans 62 residues: Photosystem II reaction center protein Z (62 aa).

2 helical membrane-spanning segments follow: residues 8–28 (TMFALIAISFLLIIGVPITFA) and 41–61 (FSGVSLWIVLVFAVGILNSFI).

This sequence belongs to the PsbZ family. PSII is composed of 1 copy each of membrane proteins PsbA, PsbB, PsbC, PsbD, PsbE, PsbF, PsbH, PsbI, PsbJ, PsbK, PsbL, PsbM, PsbT, PsbY, PsbZ, Psb30/Ycf12, at least 3 peripheral proteins of the oxygen-evolving complex and a large number of cofactors. It forms dimeric complexes.

The protein localises to the plastid. Its subcellular location is the chloroplast thylakoid membrane. Functionally, may control the interaction of photosystem II (PSII) cores with the light-harvesting antenna, regulates electron flow through the 2 photosystem reaction centers. PSII is a light-driven water plastoquinone oxidoreductase, using light energy to abstract electrons from H(2)O, generating a proton gradient subsequently used for ATP formation. This is Photosystem II reaction center protein Z from Welwitschia mirabilis (Tree tumbo).